Reading from the N-terminus, the 239-residue chain is Protein GrpE (239 aa).

Disordered stretches follow at residues 1–56 and 208–239; these read MIEN…KNTI and SMGP…SEDV. Residues 40 to 53 show a composition bias toward basic and acidic residues; that stretch reads TSQKKEAINTEELK. Over residues 224–239 the composition is skewed to acidic residues; that stretch reads TVEEDVNSEVNTSEDV.

The protein belongs to the GrpE family. In terms of assembly, homodimer.

It localises to the cytoplasm. Functionally, participates actively in the response to hyperosmotic and heat shock by preventing the aggregation of stress-denatured proteins, in association with DnaK and GrpE. It is the nucleotide exchange factor for DnaK and may function as a thermosensor. Unfolded proteins bind initially to DnaJ; upon interaction with the DnaJ-bound protein, DnaK hydrolyzes its bound ATP, resulting in the formation of a stable complex. GrpE releases ADP from DnaK; ATP binding to DnaK triggers the release of the substrate protein, thus completing the reaction cycle. Several rounds of ATP-dependent interactions between DnaJ, DnaK and GrpE are required for fully efficient folding. This is Protein GrpE from Prochlorococcus marinus (strain MIT 9215).